The primary structure comprises 444 residues: Tubulin beta chain (444 aa).

Positions 11, 69, 138, 142, 143, 144, 204, and 226 each coordinate GTP. E69 contributes to the Mg(2+) binding site.

The protein belongs to the tubulin family. In terms of assembly, dimer of alpha and beta chains. A typical microtubule is a hollow water-filled tube with an outer diameter of 25 nm and an inner diameter of 15 nM. Alpha-beta heterodimers associate head-to-tail to form protofilaments running lengthwise along the microtubule wall with the beta-tubulin subunit facing the microtubule plus end conferring a structural polarity. Microtubules usually have 13 protofilaments but different protofilament numbers can be found in some organisms and specialized cells. Mg(2+) serves as cofactor.

The protein resides in the cytoplasm. Its subcellular location is the cytoskeleton. Tubulin is the major constituent of microtubules, a cylinder consisting of laterally associated linear protofilaments composed of alpha- and beta-tubulin heterodimers. Microtubules grow by the addition of GTP-tubulin dimers to the microtubule end, where a stabilizing cap forms. Below the cap, tubulin dimers are in GDP-bound state, owing to GTPase activity of alpha-tubulin. This Euplotoides octocarinatus (Freshwater ciliate) protein is Tubulin beta chain.